A 305-amino-acid chain; its full sequence is 2-oxoacid:ferredoxin oxidoreductase subunit beta (305 aa).

Residues Cys-12, Cys-15, and Cys-46 each contribute to the [4Fe-4S] cluster site. Thiamine diphosphate is bound by residues 44 to 47 (IGCS) and His-65. Asp-90 serves as a coordination point for Mg(2+). 91 to 92 (GD) is a binding site for thiamine diphosphate. Mg(2+) is bound by residues Asn-118 and Val-120. 122 to 123 (GL) contacts thiamine diphosphate. [4Fe-4S] cluster is bound at residue Cys-197.

Heterodimer composed of an alpha and a beta subunit. Requires [4Fe-4S] cluster as cofactor. Thiamine diphosphate serves as cofactor. The cofactor is Mg(2+).

The enzyme catalyses a 2-oxocarboxylate + 2 oxidized [2Fe-2S]-[ferredoxin] + CoA = an acyl-CoA + 2 reduced [2Fe-2S]-[ferredoxin] + CO2 + H(+). Its function is as follows. Catalyzes the coenzyme A-dependent oxidative decarboxylation of different 2-oxoacids such as 2-oxoglutarate, pyruvate and 2-oxobutyrate to form their CoA derivatives. In Saccharolobus solfataricus (Sulfolobus solfataricus), this protein is 2-oxoacid:ferredoxin oxidoreductase subunit beta.